Here is a 209-residue protein sequence, read N- to C-terminus: Uridine kinase (209 aa).

ATP is bound at residue 12–19; that stretch reads GGSASGKT.

It belongs to the uridine kinase family.

It localises to the cytoplasm. The enzyme catalyses uridine + ATP = UMP + ADP + H(+). It catalyses the reaction cytidine + ATP = CMP + ADP + H(+). It functions in the pathway pyrimidine metabolism; CTP biosynthesis via salvage pathway; CTP from cytidine: step 1/3. Its pathway is pyrimidine metabolism; UMP biosynthesis via salvage pathway; UMP from uridine: step 1/1. This Chloroflexus aurantiacus (strain ATCC 29366 / DSM 635 / J-10-fl) protein is Uridine kinase.